The chain runs to 290 residues: Agroclavine dehydrogenase (290 aa).

Belongs to the fgaFS/easG family. As to quaternary structure, monomer.

It catalyses the reaction agroclavine + NADP(+) = didehydroagroclavine + NADPH + H(+). The protein operates within alkaloid biosynthesis; ergot alkaloid biosynthesis. Its function is as follows. Agroclavine dehydrogenase; part of the gene cluster that mediates the biosynthesis of fungal ergot alkaloid. DmaW catalyzes the first step of ergot alkaloid biosynthesis by condensing dimethylallyl diphosphate (DMAP) and tryptophan to form 4-dimethylallyl-L-tryptophan. The second step is catalyzed by the methyltransferase easF that methylates 4-dimethylallyl-L-tryptophan in the presence of S-adenosyl-L-methionine, resulting in the formation of 4-dimethylallyl-L-abrine. The catalase easC and the FAD-dependent oxidoreductase easE then transform 4-dimethylallyl-L-abrine to chanoclavine-I which is further oxidized by easD in the presence of NAD(+), resulting in the formation of chanoclavine-I aldehyde. Agroclavine dehydrogenase easG then mediates the conversion of chanoclavine-I aldehyde to agroclavine via a non-enzymatic adduct reaction: the substrate is an iminium intermediate that is formed spontaneously from chanoclavine-I aldehyde in the presence of glutathione. The presence of easA is not required to complete this reaction. Further conversion of agroclavine to paspalic acid is a two-step process involving oxidation of agroclavine to elymoclavine and of elymoclavine to paspalic acid, the second step being performed by the elymoclavine oxidase cloA. Paspalic acid is then further converted to D-lysergic acid. Ergopeptines are assembled from D-lysergic acid and three different amino acids by the D-lysergyl-peptide-synthetases composed each of a monomudular and a trimodular nonribosomal peptide synthetase subunit. LpsB and lpsC encode the monomodular subunits responsible for D-lysergic acid activation and incorporation into the ergopeptine backbone. LpsA1 and A2 subunits encode the trimodular nonribosomal peptide synthetase assembling the tripeptide portion of ergopeptines. LpsA1 is responsible for formation of the major ergopeptine, ergotamine, and lpsA2 for alpha-ergocryptine, the minor ergopeptine of the total alkaloid mixture elaborated by C.purpurea. D-lysergyl-tripeptides are assembled by the nonribosomal peptide synthetases and released as N-(D-lysergyl-aminoacyl)-lactams. Cyclolization of the D-lysergyl-tripeptides is performed by the Fe(2+)/2-ketoglutarate-dependent dioxygenase easH which introduces a hydroxyl group into N-(D-lysergyl-aminoacyl)-lactam at alpha-C of the aminoacyl residue followed by spontaneous condensation with the terminal lactam carbonyl group. This chain is Agroclavine dehydrogenase, found in Claviceps purpurea (Ergot fungus).